Consider the following 562-residue polypeptide: Urocanate hydratase (562 aa).

Residues 52–53 (GG), Gln-130, 176–178 (GMG), Glu-196, Arg-201, 242–243 (NA), 263–267 (QTSAH), 273–274 (YL), and Tyr-322 contribute to the NAD(+) site. Cys-410 is an active-site residue. Residue Gly-492 coordinates NAD(+).

Belongs to the urocanase family. NAD(+) is required as a cofactor.

It is found in the cytoplasm. The catalysed reaction is 4-imidazolone-5-propanoate = trans-urocanate + H2O. It functions in the pathway amino-acid degradation; L-histidine degradation into L-glutamate; N-formimidoyl-L-glutamate from L-histidine: step 2/3. Its function is as follows. Catalyzes the conversion of urocanate to 4-imidazolone-5-propionate. The protein is Urocanate hydratase of Klebsiella pneumoniae subsp. pneumoniae (strain ATCC 700721 / MGH 78578).